The sequence spans 24 residues: Humanin-like 9 (24 aa).

Belongs to the humanin family. In terms of tissue distribution, highly expressed in the kidney, heart muscle and testis.

It localises to the secreted. The protein localises to the cytoplasm. Its function is as follows. Plays a role as a neuroprotective and antiapoptotic factor. This chain is Humanin-like 9, found in Homo sapiens (Human).